A 393-amino-acid chain; its full sequence is Cysteine protease ATG4B (393 aa).

Cysteine 73 functions as the Nucleophile in the catalytic mechanism. Residues aspartate 278 and histidine 280 contribute to the active site. An LIR motif is present at residues 388–391; it reads FEIL.

It belongs to the peptidase C54 family.

It is found in the cytoplasm. The protein localises to the cytosol. It localises to the cytoplasmic vesicle. Its subcellular location is the autophagosome. The protein resides in the endoplasmic reticulum. It is found in the mitochondrion. It carries out the reaction [protein]-C-terminal L-amino acid-glycyl-phosphatidylethanolamide + H2O = [protein]-C-terminal L-amino acid-glycine + a 1,2-diacyl-sn-glycero-3-phosphoethanolamine. The enzyme catalyses [protein]-C-terminal L-amino acid-glycyl-phosphatidylserine + H2O = [protein]-C-terminal L-amino acid-glycine + a 1,2-diacyl-sn-glycero-3-phospho-L-serine. Its function is as follows. Cysteine protease that plays a key role in autophagy by mediating both proteolytic activation and delipidation of ATG8 family proteins. Required for canonical autophagy (macroautophagy), non-canonical autophagy as well as for mitophagy. The protease activity is required for proteolytic activation of ATG8 family proteins: cleaves the C-terminal amino acid of ATG8 proteins to reveal a C-terminal glycine. Exposure of the glycine at the C-terminus is essential for ATG8 proteins conjugation to phosphatidylethanolamine (PE) and insertion to membranes, which is necessary for autophagy. Protease activity is also required to counteract formation of high-molecular weight conjugates of ATG8 proteins (ATG8ylation): acts as a deubiquitinating-like enzyme that removes ATG8 conjugated to other proteins, such as ATG3. In addition to the protease activity, also mediates delipidation of ATG8 family proteins. Catalyzes delipidation of PE-conjugated forms of ATG8 proteins during macroautophagy. Also involved in non-canonical autophagy, a parallel pathway involving conjugation of ATG8 proteins to single membranes at endolysosomal compartments, by catalyzing delipidation of ATG8 proteins conjugated to phosphatidylserine (PS). In Gallus gallus (Chicken), this protein is Cysteine protease ATG4B.